A 285-amino-acid chain; its full sequence is sn-2 palmitoyl-lipid 9-desaturase (285 aa).

2 helical membrane passes run 20 to 40 (WINV…PWFF) and 44 to 64 (ALGL…CLGY). The Histidine box-1 motif lies at 65 to 70 (HRLLSH). The helical transmembrane segment at 81–101 (YAIALIGALALQGGPIFWVGG) threads the bilayer. The Histidine box-2 signature appears at 102–106 (HRQHH). Residues 169–189 (IPFALLLYVLGGWPFVFYGVF) form a helical membrane-spanning segment. The short motif at 239–243 (HHTYP) is the Histidine box-3 element.

Belongs to the fatty acid desaturase type 2 family. Fe(2+) is required as a cofactor.

The protein resides in the membrane. It catalyses the reaction a 1-acyl-2-hexadecanoyl-glycerolipid + 2 reduced [2Fe-2S]-[ferredoxin] + O2 + 2 H(+) = a 1-acyl-2-[(9Z)-hexadecenoyl]-glycerolipid + 2 oxidized [2Fe-2S]-[ferredoxin] + 2 H2O. Its pathway is lipid metabolism; fatty acid biosynthesis. Functionally, desaturase involved in fatty acid biosynthesis. Introduces a double bond at carbon 9 of palmitoyl groups (16:0) attached to the sn-2 position of the glycerol moiety of membrane glycerolipids. This chain is sn-2 palmitoyl-lipid 9-desaturase, found in Nostoc sp. (strain 36).